A 221-amino-acid chain; its full sequence is Octanoyltransferase (221 aa).

The 183-residue stretch at 38 to 220 (GEIPDTLLLL…GFREVLGDPG (183 aa)) folds into the BPL/LPL catalytic domain. Substrate contacts are provided by residues 84–91 (RGGDATFH), 149–151 (AIG), and 163–165 (GFA). C181 functions as the Acyl-thioester intermediate in the catalytic mechanism.

It belongs to the LipB family.

The protein localises to the cytoplasm. It catalyses the reaction octanoyl-[ACP] + L-lysyl-[protein] = N(6)-octanoyl-L-lysyl-[protein] + holo-[ACP] + H(+). The protein operates within protein modification; protein lipoylation via endogenous pathway; protein N(6)-(lipoyl)lysine from octanoyl-[acyl-carrier-protein]: step 1/2. Functionally, catalyzes the transfer of endogenously produced octanoic acid from octanoyl-acyl-carrier-protein onto the lipoyl domains of lipoate-dependent enzymes. Lipoyl-ACP can also act as a substrate although octanoyl-ACP is likely to be the physiological substrate. This Rubrobacter xylanophilus (strain DSM 9941 / JCM 11954 / NBRC 16129 / PRD-1) protein is Octanoyltransferase.